The primary structure comprises 148 residues: SsrA-binding protein (148 aa).

Positions 119–148 (AKGKKQHDKRQSMKEADWKREKQRLIKHTR) are disordered. Residues 127–142 (KRQSMKEADWKREKQR) show a composition bias toward basic and acidic residues.

Belongs to the SmpB family.

Its subcellular location is the cytoplasm. In terms of biological role, required for rescue of stalled ribosomes mediated by trans-translation. Binds to transfer-messenger RNA (tmRNA), required for stable association of tmRNA with ribosomes. tmRNA and SmpB together mimic tRNA shape, replacing the anticodon stem-loop with SmpB. tmRNA is encoded by the ssrA gene; the 2 termini fold to resemble tRNA(Ala) and it encodes a 'tag peptide', a short internal open reading frame. During trans-translation Ala-aminoacylated tmRNA acts like a tRNA, entering the A-site of stalled ribosomes, displacing the stalled mRNA. The ribosome then switches to translate the ORF on the tmRNA; the nascent peptide is terminated with the 'tag peptide' encoded by the tmRNA and targeted for degradation. The ribosome is freed to recommence translation, which seems to be the essential function of trans-translation. This is SsrA-binding protein from Neisseria meningitidis serogroup C (strain 053442).